Consider the following 423-residue polypeptide: Gamma-glutamyl phosphate reductase (423 aa).

It belongs to the gamma-glutamyl phosphate reductase family.

The protein resides in the cytoplasm. It carries out the reaction L-glutamate 5-semialdehyde + phosphate + NADP(+) = L-glutamyl 5-phosphate + NADPH + H(+). It participates in amino-acid biosynthesis; L-proline biosynthesis; L-glutamate 5-semialdehyde from L-glutamate: step 2/2. Catalyzes the NADPH-dependent reduction of L-glutamate 5-phosphate into L-glutamate 5-semialdehyde and phosphate. The product spontaneously undergoes cyclization to form 1-pyrroline-5-carboxylate. This is Gamma-glutamyl phosphate reductase from Paracoccus denitrificans (strain Pd 1222).